A 476-amino-acid chain; its full sequence is 8-amino-7-oxononanoate synthase (476 aa).

Substrate is bound at residue R24. Pyridoxal 5'-phosphate is bound at residue 171–172 (GF). H210 contributes to the substrate binding site. Pyridoxal 5'-phosphate contacts are provided by residues S260, 285 to 288 (DDAH), and 316 to 319 (TLSK). K319 bears the N6-(pyridoxal phosphate)lysine mark. T427 lines the substrate pocket. The Peroxisomal targeting signal PTS1 motif lies at 474 to 476 (PKL).

Belongs to the class-II pyridoxal-phosphate-dependent aminotransferase family. BioF subfamily. In terms of assembly, monomer. The cofactor is pyridoxal 5'-phosphate.

It is found in the cytoplasm. The protein localises to the cytosol. It localises to the peroxisome. It catalyses the reaction 6-carboxyhexanoyl-[ACP] + L-alanine + H(+) = (8S)-8-amino-7-oxononanoate + holo-[ACP] + CO2. It participates in cofactor biosynthesis; biotin biosynthesis; 8-amino-7-oxononanoate from pimeloyl-CoA: step 1/1. In terms of biological role, catalyzes the decarboxylative condensation of pimeloyl-[acyl-carrier protein] and L-alanine to produce 8-amino-7-oxononanoate (AON), [acyl-carrier protein], and carbon dioxide. Required for the biosynthesis of D-biotin that prevents light-mediated cell death and modulates defense gene expression, probably by avoiding hydrogen peroxide H(2)O(2) accumulation. This chain is 8-amino-7-oxononanoate synthase, found in Arabidopsis thaliana (Mouse-ear cress).